The following is a 360-amino-acid chain: Phosphoserine aminotransferase (360 aa).

R42 is a binding site for L-glutamate. The pyridoxal 5'-phosphate site is built by W102, T152, D171, and Q194. K195 carries the post-translational modification N6-(pyridoxal phosphate)lysine. 237–238 is a pyridoxal 5'-phosphate binding site; sequence NT.

This sequence belongs to the class-V pyridoxal-phosphate-dependent aminotransferase family. SerC subfamily. In terms of assembly, homodimer. It depends on pyridoxal 5'-phosphate as a cofactor.

The protein localises to the cytoplasm. The catalysed reaction is O-phospho-L-serine + 2-oxoglutarate = 3-phosphooxypyruvate + L-glutamate. It catalyses the reaction 4-(phosphooxy)-L-threonine + 2-oxoglutarate = (R)-3-hydroxy-2-oxo-4-phosphooxybutanoate + L-glutamate. Its pathway is amino-acid biosynthesis; L-serine biosynthesis; L-serine from 3-phospho-D-glycerate: step 2/3. The protein operates within cofactor biosynthesis; pyridoxine 5'-phosphate biosynthesis; pyridoxine 5'-phosphate from D-erythrose 4-phosphate: step 3/5. Functionally, catalyzes the reversible conversion of 3-phosphohydroxypyruvate to phosphoserine and of 3-hydroxy-2-oxo-4-phosphonooxybutanoate to phosphohydroxythreonine. The chain is Phosphoserine aminotransferase from Coxiella burnetii (strain Dugway 5J108-111).